The sequence spans 20 residues: Phospholipase A2 homolog P-elapitoxin-Aa1a gamma chain (20 aa).

It belongs to the phospholipase A2 family. Group I subfamily. As to quaternary structure, heterotrimer of alpha, beta and gamma chains, each related to PLA2. In terms of processing, glycosylated. As to expression, expressed by the venom gland.

Its subcellular location is the secreted. Functionally, heterotrimer: Snake venom phospholipase A2 (PLA2) that has presynaptic neurotoxicity. Inhibits nerve-evoked twitch contractions but not responses to cholinergic agonists acetylcholine and carbachol and to depolarizing agonist KCl. Causes a fade in tetanic contractions. Displays a triphasic mode of action with depression, enhancement and blockade of neurotransmission. Does not display myotoxic activity such as changes in baseline muscle tension or inhibition of directly stimulated muscle twitches. All subunits are necessary for maximum toxicity. Its function is as follows. Monomer: the gamma chain has no significant enzymatic activity and is not toxic by itself. This chain is Phospholipase A2 homolog P-elapitoxin-Aa1a gamma chain, found in Acanthophis antarcticus (Common death adder).